The chain runs to 398 residues: G2/mitotic-specific cyclin-B2 (398 aa).

Disordered regions lie at residues 1–26 (MALLRRPTVSTDLENNDTGVNSKPKS) and 53–76 (AQNTKVPVPPTKTTNVNKHPKPTA). At Thr8 the chain carries Phosphothreonine. Residues 8-23 (TVSTDLENNDTGVNSK) show a composition bias toward polar residues. Residues 55-69 (NTKVPVPPTKTTNVN) show a composition bias toward low complexity. Residues Ser77 and Ser92 each carry the phosphoserine modification. The residue at position 94 (Thr94) is a Phosphothreonine. Ser99, Ser392, and Ser398 each carry phosphoserine.

Belongs to the cyclin family. Cyclin AB subfamily. Interacts with the CDK1 protein kinase to form a serine/threonine kinase holoenzyme complex also known as maturation promoting factor (MPF). The cyclin subunit imparts substrate specificity to the complex.

Its function is as follows. Essential for the control of the cell cycle at the G2/M (mitosis) transition. The chain is G2/mitotic-specific cyclin-B2 (CCNB2) from Bos taurus (Bovine).